A 511-amino-acid chain; its full sequence is 2,3-bisphosphoglycerate-independent phosphoglycerate mutase (511 aa).

Residues Asp-12 and Ser-62 each contribute to the Mn(2+) site. The Phosphoserine intermediate role is filled by Ser-62. Residues His-123, 153–154 (RD), Arg-185, Arg-191, 260–263 (RPDR), and Lys-333 contribute to the substrate site. Mn(2+) contacts are provided by Asp-400, His-404, Asp-441, His-442, and His-460.

The protein belongs to the BPG-independent phosphoglycerate mutase family. As to quaternary structure, monomer. Requires Mn(2+) as cofactor.

It catalyses the reaction (2R)-2-phosphoglycerate = (2R)-3-phosphoglycerate. It participates in carbohydrate degradation; glycolysis; pyruvate from D-glyceraldehyde 3-phosphate: step 3/5. Its function is as follows. Catalyzes the interconversion of 2-phosphoglycerate and 3-phosphoglycerate. The protein is 2,3-bisphosphoglycerate-independent phosphoglycerate mutase of Clostridium novyi (strain NT).